Here is a 1825-residue protein sequence, read N- to C-terminus: Serine protease/ABC transporter B family protein tagD (1825 aa).

The signal sequence occupies residues 1 to 26; that stretch reads MKSNTNIRVLLVSGLILIFIFLGIKF. The region spanning 307–727 is the Peptidase S8 domain; it reads PKAIFGTKDT…NAVFDTFAGA (421 aa). Catalysis depends on charge relay system residues aspartate 338 and histidine 384. Asparagine 629 carries N-linked (GlcNAc...) asparagine glycosylation. Serine 652 serves as the catalytic Charge relay system. N-linked (GlcNAc...) asparagine glycosylation is found at asparagine 704, asparagine 781, asparagine 849, and asparagine 896. A helical membrane pass occupies residues 971–991; it reads YIVIIVAGGTMSLIITVLILI. An N-linked (GlcNAc...) asparagine glycan is attached at asparagine 1018. 4 helical membrane passes run 1071–1091, 1116–1136, 1189–1209, and 1210–1230; these read FIIEITISTACSLVATAASIL, FIIIFLLALLEFVFSTISSWI, GILLSVSVGICKFVGSLVFIF, and TISWKLSLAFFATVPVLAIVT. The ABC transmembrane type-1 domain maps to 1075–1358; that stretch reads ITISTACSLV…LFGVYSSYVQ (284 aa). A glycan (N-linked (GlcNAc...) asparagine) is linked at asparagine 1295. 2 helical membrane-spanning segments follow: residues 1304-1324 and 1327-1347; these read WLMVESLAFIILYFGAYLAIQ and FTVGLLVSFSLYIGYVIDSST. Positions 1386–1529 are disordered; it reads DNIIDTNQDN…NDDPNDNNGI (144 aa). The segment covering 1388 to 1402 has biased composition (low complexity); sequence IIDTNQDNNNNNNND. Residues 1403-1415 show a composition bias toward acidic residues; sequence DISDSSSDDDDDN. N-linked (GlcNAc...) asparagine glycosylation occurs at asparagine 1424. The span at 1465 to 1494 shows a compositional bias: low complexity; sequence GEGIDNNNNNNNDNNINDDNNQQDPNNNNN. Over residues 1495–1514 the composition is skewed to acidic residues; it reads EIDDDGDDDGDDDDEGEDEN. Positions 1515 to 1529 are enriched in low complexity; that stretch reads NNNNNNDDPNDNNGI. The ABC transporter domain occupies 1576–1813; the sequence is IEFKNVSFCY…KGKYYRMFAF (238 aa). N-linked (GlcNAc...) asparagine glycosylation is present at asparagine 1580. Residue 1611 to 1618 participates in ATP binding; sequence GPSGSGKS. 2 N-linked (GlcNAc...) asparagine glycosylation sites follow: asparagine 1715 and asparagine 1755.

In the C-terminal section; belongs to the ABC transporter superfamily. ABCB family. Multidrug resistance exporter (TC 3.A.1.201) subfamily. The protein in the N-terminal section; belongs to the peptidase S8 family.

It is found in the membrane. In Dictyostelium discoideum (Social amoeba), this protein is Serine protease/ABC transporter B family protein tagD (tagD).